The following is a 227-amino-acid chain: Lipoprotein-releasing system ATP-binding protein LolD (227 aa).

One can recognise an ABC transporter domain in the interval 7–227; the sequence is LSCRNLGKSY…RLEGGRLVEA (221 aa). 43 to 50 is a binding site for ATP; it reads GTSGSGKS.

Belongs to the ABC transporter superfamily. Lipoprotein translocase (TC 3.A.1.125) family. In terms of assembly, the complex is composed of two ATP-binding proteins (LolD) and two transmembrane proteins (LolC and LolE).

It localises to the cell inner membrane. Its function is as follows. Part of the ABC transporter complex LolCDE involved in the translocation of mature outer membrane-directed lipoproteins, from the inner membrane to the periplasmic chaperone, LolA. Responsible for the formation of the LolA-lipoprotein complex in an ATP-dependent manner. The sequence is that of Lipoprotein-releasing system ATP-binding protein LolD from Pseudomonas syringae pv. tomato (strain ATCC BAA-871 / DC3000).